A 223-amino-acid polypeptide reads, in one-letter code: UPF0502 protein Sde_2426 (223 aa).

This sequence belongs to the UPF0502 family.

The polypeptide is UPF0502 protein Sde_2426 (Saccharophagus degradans (strain 2-40 / ATCC 43961 / DSM 17024)).